Reading from the N-terminus, the 91-residue chain is MARSLANAKIQSVFGSEKLSNAVFRRGFAAAAKTALDGSVSTAEMKKRAGEASSEKAPWVPDPKTGYYRPETVSEEIDPAELRAILLNNKQ.

The segment at K47–T72 is disordered.

The protein belongs to the LEA type 3 family.

The protein resides in the cytoplasm. It is found in the nucleus. This Arabidopsis thaliana (Mouse-ear cress) protein is Late embryogenis abundant protein 2.